We begin with the raw amino-acid sequence, 392 residues long: Glyceraldehyde-3-phosphate dehydrogenase A, chloroplastic (392 aa).

Residues 1–56 constitute a chloroplast transit peptide; that stretch reads NSSLQVSNKGFSEFSGLRTSSAIPFGRKTNDDLLSVVAFQTSVIGGGNSKRGVVEA. Residues 67–68, D91, and R136 each bind NADP(+); that span reads RI. Residues 208-210, T239, R254, 267-268, and R290 each bind D-glyceraldehyde 3-phosphate; these read SCT and TG. C209 (nucleophile) is an active-site residue. N372 lines the NADP(+) pocket.

Belongs to the glyceraldehyde-3-phosphate dehydrogenase family. In terms of assembly, tetramer of either four A chains (GAPDH 2) or two A and two B chains (GAPDH 1).

The protein resides in the plastid. The protein localises to the chloroplast. It catalyses the reaction D-glyceraldehyde 3-phosphate + phosphate + NADP(+) = (2R)-3-phospho-glyceroyl phosphate + NADPH + H(+). It participates in carbohydrate biosynthesis; Calvin cycle. In Nicotiana tabacum (Common tobacco), this protein is Glyceraldehyde-3-phosphate dehydrogenase A, chloroplastic (GAPA).